Here is a 211-residue protein sequence, read N- to C-terminus: Protein-L-isoaspartate O-methyltransferase (211 aa).

Residue Ser-62 is part of the active site.

It belongs to the methyltransferase superfamily. L-isoaspartyl/D-aspartyl protein methyltransferase family.

It localises to the cytoplasm. It carries out the reaction [protein]-L-isoaspartate + S-adenosyl-L-methionine = [protein]-L-isoaspartate alpha-methyl ester + S-adenosyl-L-homocysteine. Catalyzes the methyl esterification of L-isoaspartyl residues in peptides and proteins that result from spontaneous decomposition of normal L-aspartyl and L-asparaginyl residues. It plays a role in the repair and/or degradation of damaged proteins. In Shewanella woodyi (strain ATCC 51908 / MS32), this protein is Protein-L-isoaspartate O-methyltransferase.